We begin with the raw amino-acid sequence, 542 residues long: Berberine bridge enzyme-like 25 (542 aa).

The signal sequence occupies residues Met-1–Ser-30. Cysteines 40 and 104 form a disulfide. The N-linked (GlcNAc...) asparagine glycan is linked to Asn-61. In terms of domain architecture, FAD-binding PCMH-type spans Thr-82–Val-258. His-119 bears the Pros-8alpha-FAD histidine mark. Residues Asn-308 and Asn-436 are each glycosylated (N-linked (GlcNAc...) asparagine).

This sequence belongs to the oxygen-dependent FAD-linked oxidoreductase family. It depends on FAD as a cofactor.

The protein resides in the secreted. It localises to the cell wall. This chain is Berberine bridge enzyme-like 25, found in Arabidopsis thaliana (Mouse-ear cress).